The chain runs to 311 residues: MASKDFAIGMILLSQIMVGFLGNFFLLYHYSFLCFTRGMLQSTDLILKHLTIANSLVILSKGIPQTMAAFGLKDSLSDIGCKFVFYVHRVGRAVCVGNACLLSVFQVITISPSEFRWAELKLHAHKYIRSFILVLCWILNTLVNITVLLHVTGKWNSINSTKTNDYGYCSGGSRSRIPHSLHIVLLSSLDVLCLGLMTLASGSMVFILHRHKQQVQHIHGTNLSARSSPESRVTQSILVLVSTLCYFTRSPPSLHMSLFPNPSWWLLNTSALITACFPMVSPFVLMSRHPRIPRLGSACCGRNPQFPKLVR.

Topologically, residues 1-5 (MASKD) are extracellular. Residues 6-26 (FAIGMILLSQIMVGFLGNFFL) form a helical membrane-spanning segment. Residues 27–51 (LYHYSFLCFTRGMLQSTDLILKHLT) are Cytoplasmic-facing. Residues 52–72 (IANSLVILSKGIPQTMAAFGL) form a helical membrane-spanning segment. The Extracellular segment spans residues 73–92 (KDSLSDIGCKFVFYVHRVGR). Residues 93 to 113 (AVCVGNACLLSVFQVITISPS) traverse the membrane as a helical segment. The Cytoplasmic portion of the chain corresponds to 114 to 130 (EFRWAELKLHAHKYIRS). Residues 131–151 (FILVLCWILNTLVNITVLLHV) traverse the membrane as a helical segment. Over 152–187 (TGKWNSINSTKTNDYGYCSGGSRSRIPHSLHIVLLS) the chain is Extracellular. Asparagine 159 carries an N-linked (GlcNAc...) asparagine glycan. Residues 188 to 208 (SLDVLCLGLMTLASGSMVFIL) form a helical membrane-spanning segment. Over 209–232 (HRHKQQVQHIHGTNLSARSSPESR) the chain is Cytoplasmic. The helical transmembrane segment at 233 to 249 (VTQSILVLVSTLCYFTR) threads the bilayer. Residues 250–264 (SPPSLHMSLFPNPSW) are Extracellular-facing. The chain crosses the membrane as a helical span at residues 265-285 (WLLNTSALITACFPMVSPFVL). Over 286–311 (MSRHPRIPRLGSACCGRNPQFPKLVR) the chain is Cytoplasmic.

Belongs to the G-protein coupled receptor 1 family.

The protein localises to the cell membrane. Its function is as follows. Putative pheromone receptor. The protein is Vomeronasal type-1 receptor 3 (VN1R3) of Homo sapiens (Human).